Consider the following 186-residue polypeptide: Ribosome-recycling factor (186 aa).

Belongs to the RRF family.

Its subcellular location is the cytoplasm. Its function is as follows. Responsible for the release of ribosomes from messenger RNA at the termination of protein biosynthesis. May increase the efficiency of translation by recycling ribosomes from one round of translation to another. The protein is Ribosome-recycling factor of Amoebophilus asiaticus (strain 5a2).